A 141-amino-acid chain; its full sequence is MSTLQVDIVSAEEQLYAGQASMVIAPAAEGDVGIAPRHAPLLTRLRPGELRITPEGDEEEFFFYASGGLLEVQPHKVTVLADTAVRARDIDEAAALEAKRRAEEKLREQKDEVDYSSVQAELAEAMAQLRTLESLRKRAKR.

Belongs to the ATPase epsilon chain family. As to quaternary structure, F-type ATPases have 2 components, CF(1) - the catalytic core - and CF(0) - the membrane proton channel. CF(1) has five subunits: alpha(3), beta(3), gamma(1), delta(1), epsilon(1). CF(0) has three main subunits: a, b and c.

The protein localises to the cell inner membrane. Functionally, produces ATP from ADP in the presence of a proton gradient across the membrane. The protein is ATP synthase epsilon chain of Halorhodospira halophila (strain DSM 244 / SL1) (Ectothiorhodospira halophila (strain DSM 244 / SL1)).